The chain runs to 436 residues: FAD-dependent monooxygenase pigN (436 aa).

FAD is bound by residues E40, G53, and R118. R200 is a catalytic residue. FAD is bound by residues D316 and A329.

It belongs to the paxM FAD-dependent monooxygenase family. FAD is required as a cofactor.

Its pathway is secondary metabolite biosynthesis. In terms of biological role, FAD-dependent monooxygenase; part of the gene cluster that mediates the biosynthesis of azaphilone pigments (MonAzPs), a complex mixture of compounds with a common azaphilone skeleton very widely used as food colorants. Within the pathway, pigN hydroxylates the benzaldehyde M7PKS-1 intermediate at C-4 to form the pyran ring. The first step of the pathway is performed by the nrPKS pigA that forms the hexaketide precursor from successive condensations of five malonyl-CoA units, with a simple acetyl-CoA starter unit. The role of esterase pigG is not clear, but it may play at most a supplementary role in the formation of the benzaldehyde produced by the pigA nrPKS. This very reactive benzaldehyde is intercepted by the pigC ketoreductase that to provide the first stable enzyme-free MonAzPs intermediate, 6-(4-hydroxy-2-oxopentyl)-3-methyl-2,4-dioxocyclohexane carbaldehyde, also known as M7PKS-1. The FAD-dependent monooxygenase pigN hydroxylates M7PKS-1 at C-4, which triggers the formation of the pyran ring. PigJ, pigK and pigD are involved in the acetylation of the pyran ring. PigJ and pigK form the two subunits of a dedicated fungal FAS that produces the side chain fatty acyl moiety of MonAzPs and pigD transfers the fatty acyl chain to the C-4 alcohol. PigM and pigO are involved in the elimination of the omega-1 alcohol. PigM acts as an O-acetyltransferase that synthesizes the putative O-11 acetyl intermediate whereas pigO eliminates acetic acid to yield an intermediate with a C10(11) double bond. The dehydration of the C-11 alcohol followed by the reduction of the C6(7) double bond by the NAD(P)H-dependent oxidoreductase pigE increases the electrophilicity of the C-5 ketone of the resulting acyl benzopyran. This in turn sets up the C-5 ketone for an intramolecular Knoevenagel aldol condensation with the C-20 enol of the side chain. This condensation affords the characteristic linear tricyclic carbon skeletons of the yellow pigments that serve as the common precursors for the classical yellow pigments monascin and ankaflavin, orange pigments rubopunctatin and monascorubrin, and red pigments ribropunctamine and monascorubramine. The FAD-dependent oxidoreductase pigF is especially invoved in the biosynthesis of orange and red pigments via desaturation of C6(7). This chain is FAD-dependent monooxygenase pigN, found in Monascus ruber (Mold).